Here is a 445-residue protein sequence, read N- to C-terminus: MSNRKYFGTDGIRGRVGNAPITPDFVLKLGWAAGKVLARHGSRKIIIGKDTRISGYMLESALEAGLAAAGLSASFTGPMPTPAVAYLTRTFRAEAGIVISASHNPFYDNGIKFFSIDGTKLPDDVEEAIEAEMEKEITCVDSAELGKASRIVDAAGRYIEFCKGTFPNELSLNGLKVVVDCANGATYHIAPNVLRELGATVIAIGCEPNGVNINEEVGATDVRALQARVLAEKADLGIALDGDGDRVIMVDHEGNKVDGDQIMYIIAREGLRQGQLRGGAVGTLMSNMGLELALKQLGIPFARAKVGDRYVLEKLQEKGWRIGAENSGHVILLDKTTTGDGIVAGLQVLAAMVRNHMSLHDLCSGMKMFPQILVNVRYTAGSGDPLENEAVKAVTADVEATLGNRGRVLLRKSGTEPLIRVMVEGEDEAQVTAFAHRIADAVKAV.

S102 serves as the catalytic Phosphoserine intermediate. Mg(2+) contacts are provided by S102, D241, D243, and D245. S102 is modified (phosphoserine).

The protein belongs to the phosphohexose mutase family. Requires Mg(2+) as cofactor. Post-translationally, activated by phosphorylation.

It carries out the reaction alpha-D-glucosamine 1-phosphate = D-glucosamine 6-phosphate. In terms of biological role, catalyzes the conversion of glucosamine-6-phosphate to glucosamine-1-phosphate. This chain is Phosphoglucosamine mutase, found in Salmonella dublin (strain CT_02021853).